A 160-amino-acid polypeptide reads, in one-letter code: Probable transcriptional regulator YgiV (160 aa).

Its function is as follows. Represses expression of mcbR. This chain is Probable transcriptional regulator YgiV (ygiV), found in Escherichia coli (strain K12).